Reading from the N-terminus, the 285-residue chain is Bifunctional protein FolD (285 aa).

Residues 166–168 (GAS) and I232 each bind NADP(+).

The protein belongs to the tetrahydrofolate dehydrogenase/cyclohydrolase family. As to quaternary structure, homodimer.

It carries out the reaction (6R)-5,10-methylene-5,6,7,8-tetrahydrofolate + NADP(+) = (6R)-5,10-methenyltetrahydrofolate + NADPH. The catalysed reaction is (6R)-5,10-methenyltetrahydrofolate + H2O = (6R)-10-formyltetrahydrofolate + H(+). It participates in one-carbon metabolism; tetrahydrofolate interconversion. Catalyzes the oxidation of 5,10-methylenetetrahydrofolate to 5,10-methenyltetrahydrofolate and then the hydrolysis of 5,10-methenyltetrahydrofolate to 10-formyltetrahydrofolate. In Actinobacillus succinogenes (strain ATCC 55618 / DSM 22257 / CCUG 43843 / 130Z), this protein is Bifunctional protein FolD.